Here is a 388-residue protein sequence, read N- to C-terminus: Succinate--CoA ligase [ADP-forming] subunit beta (388 aa).

The region spanning 9 to 244 is the ATP-grasp domain; the sequence is KQLFSRYGLP…PSQEDPREAQ (236 aa). ATP is bound by residues K46, 53–55, E99, T102, and E107; that span reads GRG. Positions 199 and 213 each coordinate Mg(2+). Residues N264 and 321-323 each bind substrate; that span reads GIV.

The protein belongs to the succinate/malate CoA ligase beta subunit family. In terms of assembly, heterotetramer of two alpha and two beta subunits. The cofactor is Mg(2+).

The catalysed reaction is succinate + ATP + CoA = succinyl-CoA + ADP + phosphate. It carries out the reaction GTP + succinate + CoA = succinyl-CoA + GDP + phosphate. The protein operates within carbohydrate metabolism; tricarboxylic acid cycle; succinate from succinyl-CoA (ligase route): step 1/1. Succinyl-CoA synthetase functions in the citric acid cycle (TCA), coupling the hydrolysis of succinyl-CoA to the synthesis of either ATP or GTP and thus represents the only step of substrate-level phosphorylation in the TCA. The beta subunit provides nucleotide specificity of the enzyme and binds the substrate succinate, while the binding sites for coenzyme A and phosphate are found in the alpha subunit. The polypeptide is Succinate--CoA ligase [ADP-forming] subunit beta (Proteus mirabilis (strain HI4320)).